A 219-amino-acid polypeptide reads, in one-letter code: Uracil-DNA glycosylase (219 aa).

The Proton acceptor role is filled by aspartate 61.

Belongs to the uracil-DNA glycosylase (UDG) superfamily. UNG family.

It is found in the cytoplasm. It catalyses the reaction Hydrolyzes single-stranded DNA or mismatched double-stranded DNA and polynucleotides, releasing free uracil.. Excises uracil residues from the DNA which can arise as a result of misincorporation of dUMP residues by DNA polymerase or due to deamination of cytosine. The sequence is that of Uracil-DNA glycosylase from Neisseria meningitidis serogroup C (strain 053442).